The following is a 211-amino-acid chain: Proteasome subunit beta (211 aa).

Residues 1–9 (MSEAETLKG) constitute a propeptide, removed in mature form; by autocatalysis. Thr-10 (nucleophile) is an active-site residue.

The protein belongs to the peptidase T1B family. The 20S proteasome core is composed of 14 alpha and 14 beta subunits that assemble into four stacked heptameric rings, resulting in a barrel-shaped structure. The two inner rings, each composed of seven catalytic beta subunits, are sandwiched by two outer rings, each composed of seven alpha subunits. The catalytic chamber with the active sites is on the inside of the barrel. Has a gated structure, the ends of the cylinder being occluded by the N-termini of the alpha-subunits. Is capped at one or both ends by the proteasome regulatory ATPase, PAN.

It localises to the cytoplasm. The catalysed reaction is Cleavage of peptide bonds with very broad specificity.. Its activity is regulated as follows. The formation of the proteasomal ATPase PAN-20S proteasome complex, via the docking of the C-termini of PAN into the intersubunit pockets in the alpha-rings, triggers opening of the gate for substrate entry. Interconversion between the open-gate and close-gate conformations leads to a dynamic regulation of the 20S proteasome proteolysis activity. Component of the proteasome core, a large protease complex with broad specificity involved in protein degradation. The protein is Proteasome subunit beta of Methanosphaerula palustris (strain ATCC BAA-1556 / DSM 19958 / E1-9c).